Here is a 127-residue protein sequence, read N- to C-terminus: Aspartate 1-decarboxylase (127 aa).

The active-site Schiff-base intermediate with substrate; via pyruvic acid is serine 25. Serine 25 is subject to Pyruvic acid (Ser). Threonine 57 is a substrate binding site. Tyrosine 58 functions as the Proton donor in the catalytic mechanism. Residue glycine 73 to alanine 75 coordinates substrate.

The protein belongs to the PanD family. In terms of assembly, heterooctamer of four alpha and four beta subunits. It depends on pyruvate as a cofactor. In terms of processing, is synthesized initially as an inactive proenzyme, which is activated by self-cleavage at a specific serine bond to produce a beta-subunit with a hydroxyl group at its C-terminus and an alpha-subunit with a pyruvoyl group at its N-terminus.

It localises to the cytoplasm. It catalyses the reaction L-aspartate + H(+) = beta-alanine + CO2. Its pathway is cofactor biosynthesis; (R)-pantothenate biosynthesis; beta-alanine from L-aspartate: step 1/1. Functionally, catalyzes the pyruvoyl-dependent decarboxylation of aspartate to produce beta-alanine. This is Aspartate 1-decarboxylase from Listeria innocua serovar 6a (strain ATCC BAA-680 / CLIP 11262).